The chain runs to 93 residues: Mammaglobin-A (93 aa).

The N-terminal stretch at 1–18 (MKLLMVLMLAALSQHCYA) is a signal peptide. 2 N-linked (GlcNAc...) asparagine glycosylation sites follow: N53 and N68.

It belongs to the secretoglobin family. Lipophilin subfamily. In terms of tissue distribution, mammary gland specific. Over-expressed in breast cancer.

It is found in the secreted. This is Mammaglobin-A (SCGB2A2) from Homo sapiens (Human).